Here is a 185-residue protein sequence, read N- to C-terminus: Ribonuclease HII (185 aa).

Residues 1–185 (MKICGIDEAG…LKHLQGILEF (185 aa)) enclose the RNase H type-2 domain. A divalent metal cation-binding residues include Asp-7, Glu-8, and Asp-96.

Belongs to the RNase HII family. Requires Mn(2+) as cofactor. Mg(2+) is required as a cofactor.

The protein localises to the cytoplasm. The enzyme catalyses Endonucleolytic cleavage to 5'-phosphomonoester.. Its function is as follows. Endonuclease that specifically degrades the RNA of RNA-DNA hybrids. This Campylobacter hominis (strain ATCC BAA-381 / DSM 21671 / CCUG 45161 / LMG 19568 / NCTC 13146 / CH001A) protein is Ribonuclease HII.